The sequence spans 410 residues: 2-oxoisovalerate dehydrogenase subunit alpha (410 aa).

Belongs to the BCKDHA family. Heterodimer of an alpha and a beta chain. Requires thiamine diphosphate as cofactor.

The enzyme catalyses N(6)-[(R)-lipoyl]-L-lysyl-[protein] + 3-methyl-2-oxobutanoate + H(+) = N(6)-[(R)-S(8)-2-methylpropanoyldihydrolipoyl]-L-lysyl-[protein] + CO2. Its function is as follows. The branched-chain alpha-keto dehydrogenase complex catalyzes the overall conversion of alpha-keto acids to acyl-CoA and CO(2). It contains multiple copies of three enzymatic components: branched-chain alpha-keto acid decarboxylase (E1), lipoamide acyltransferase (E2) and lipoamide dehydrogenase (E3). This is 2-oxoisovalerate dehydrogenase subunit alpha (bkdA1) from Pseudomonas aeruginosa (strain ATCC 15692 / DSM 22644 / CIP 104116 / JCM 14847 / LMG 12228 / 1C / PRS 101 / PAO1).